The chain runs to 247 residues: NAD(P)H-quinone oxidoreductase subunit K (247 aa).

[4Fe-4S] cluster is bound by residues Cys63, Cys64, Cys128, and Cys159. The disordered stretch occupies residues 218–247 (TRQAPPKELTEAIGMEVPPALASQKQKEEA).

This sequence belongs to the complex I 20 kDa subunit family. NDH-1 can be composed of about 15 different subunits; different subcomplexes with different compositions have been identified which probably have different functions. The cofactor is [4Fe-4S] cluster.

It is found in the cellular thylakoid membrane. The enzyme catalyses a plastoquinone + NADH + (n+1) H(+)(in) = a plastoquinol + NAD(+) + n H(+)(out). It catalyses the reaction a plastoquinone + NADPH + (n+1) H(+)(in) = a plastoquinol + NADP(+) + n H(+)(out). Its function is as follows. NDH-1 shuttles electrons from an unknown electron donor, via FMN and iron-sulfur (Fe-S) centers, to quinones in the respiratory and/or the photosynthetic chain. The immediate electron acceptor for the enzyme in this species is believed to be plastoquinone. Couples the redox reaction to proton translocation, and thus conserves the redox energy in a proton gradient. Cyanobacterial NDH-1 also plays a role in inorganic carbon-concentration. The polypeptide is NAD(P)H-quinone oxidoreductase subunit K (Crocosphaera subtropica (strain ATCC 51142 / BH68) (Cyanothece sp. (strain ATCC 51142))).